Here is a 264-residue protein sequence, read N- to C-terminus: Catenin delta-2 (264 aa).

ARM repeat units follow at residues 20-59 (NKIK…NLVY), 64-104 (DDNK…NLSS), 120-162 (LTNA…NVSS), and 166-211 (EARR…NLSY). The segment at 238-264 (GKDAESSGCWGKKKKKKKSQDQWDGVG) is disordered.

It belongs to the beta-catenin family. As to quaternary structure, binds to E-cadherin at a juxtamembrane site within the cytoplasmic domain. Binds to PSEN1. Interacts with ZBTB33. Interacts with ARHGEF28. Interacts (via the extreme C-terminus) with FRMPD2 (via the PDZ 2 domain). Interacts with PDZD2. Interacts with CDK5. Interacts with CTNBB1. Interacts with GSK3A and GSK3B. Interacts with DNM2. Interacts with CCDC85B. In terms of processing, O-glycosylated. Post-translationally, phosphorylated by CDK5. Phosphorylated by GSK3B. Predominantly expressed in brain; accumulates in cortical neurons (at protein level).

The protein localises to the nucleus. The protein resides in the cell junction. Its subcellular location is the adherens junction. It localises to the cell projection. It is found in the dendrite. The protein localises to the perikaryon. Its function is as follows. Has a critical role in neuronal development, particularly in the formation and/or maintenance of dendritic spines and synapses. Involved in the regulation of canonical Wnt signaling. It probably acts on beta-catenin turnover, facilitating beta-catenin interaction with GSK3B, phosphorylation, ubiquitination and degradation. May be involved in neuronal cell adhesion and tissue morphogenesis and integrity by regulating adhesion molecules. Functions as a transcriptional activator when bound to ZBTB33. The polypeptide is Catenin delta-2 (Ctnnd2) (Rattus norvegicus (Rat)).